A 542-amino-acid chain; its full sequence is Chaperonin GroEL 3 (542 aa).

Residues 30–33 (TLGP), lysine 51, 87–91 (DGTTT), glycine 415, and aspartate 496 contribute to the ATP site.

The protein belongs to the chaperonin (HSP60) family. In terms of assembly, forms a cylinder of 14 subunits composed of two heptameric rings stacked back-to-back. Interacts with the co-chaperonin GroES.

The protein localises to the cytoplasm. The catalysed reaction is ATP + H2O + a folded polypeptide = ADP + phosphate + an unfolded polypeptide.. Together with its co-chaperonin GroES, plays an essential role in assisting protein folding. The GroEL-GroES system forms a nano-cage that allows encapsulation of the non-native substrate proteins and provides a physical environment optimized to promote and accelerate protein folding. The protein is Chaperonin GroEL 3 of Sinorhizobium medicae (strain WSM419) (Ensifer medicae).